The chain runs to 440 residues: Argininosuccinate lyase (440 aa).

It belongs to the lyase 1 family. Argininosuccinate lyase subfamily.

Its subcellular location is the cytoplasm. It catalyses the reaction 2-(N(omega)-L-arginino)succinate = fumarate + L-arginine. It functions in the pathway amino-acid biosynthesis; L-arginine biosynthesis; L-arginine from L-ornithine and carbamoyl phosphate: step 3/3. The chain is Argininosuccinate lyase from Clostridium botulinum (strain Loch Maree / Type A3).